Here is a 709-residue protein sequence, read N- to C-terminus: Probable lanosterol 14-alpha demethylase (709 aa).

A heme-binding site is contributed by Cys-425.

This sequence belongs to the cytochrome P450 family. Heme is required as a cofactor.

The protein localises to the membrane. The catalysed reaction is a 14alpha-methyl steroid + 3 reduced [NADPH--hemoprotein reductase] + 3 O2 = a Delta(14) steroid + formate + 3 oxidized [NADPH--hemoprotein reductase] + 4 H2O + 4 H(+). Its pathway is steroid biosynthesis; zymosterol biosynthesis; zymosterol from lanosterol: step 1/6. Its function is as follows. Catalyzes the 14-alpha demethylation of obtusifoliol to 4 alpha-methyl-5 alpha-ergosta-8,14,24(28)-trien-3 beta-ol. This is Probable lanosterol 14-alpha demethylase from Acanthamoeba polyphaga (Amoeba).